The chain runs to 382 residues: Mucosal addressin cell adhesion molecule 1 (382 aa).

An N-terminal signal peptide occupies residues 1–18 (MDFGLALLLAGLLGLLLG). Residues 19–317 (QSLQVKPLQV…TGSSKPAGDQ (299 aa)) are Extracellular-facing. 2 Ig-like domains span residues 23–112 (VKPL…LLVY) and 113–231 (AFPD…TSPE). Disulfide bonds link Cys47–Cys94, Cys51–Cys98, and Cys134–Cys204. An N-linked (GlcNAc...) asparagine glycan is attached at Asn83. The tract at residues 223–314 (VLHSPTSPEP…VIPTGSSKPA (92 aa)) is disordered. Residues 226–317 (SPTSPEPPDT…TGSSKPAGDQ (92 aa)) are mucin-like. One copy of the 1; truncated repeat lies at 228 to 231 (TSPE). The interval 228 to 271 (TSPEPPDTTSPESPDTTSPESPDTTSQEPPDTTSPEPPDKTSPE) is 5.5 X 8 AA tandem repeats of [PS]-P-D-T-T-S-[QP]-E. 5 consecutive repeat copies span residues 232-239 (PPDTTSPE), 240-247 (SPDTTSPE), 248-255 (SPDTTSQE), 256-263 (PPDTTSPE), and 264-271 (PPDKTSPE). The segment covering 236–261 (TSPESPDTTSPESPDTTSQEPPDTTS) has biased composition (low complexity). Residues 277–288 (GSTHTPRSPGST) are compositionally biased toward low complexity. Residues 318–338 (LPAALWTSSAVLGLLLLALPT) form a helical membrane-spanning segment. The Cytoplasmic portion of the chain corresponds to 339–382 (YHLWKRCRHLAEDDTHPPASLRLLPQVSAWAGLRGTGQVGISPS).

In terms of assembly, homodimer. Post-translationally, the Ser/Thr-rich mucin-like domain may provide possible sites for O-glycosylation. As to expression, highly expressed on high endothelial venules (HEV) and lamina propia venules found in the small intestine, and to a lesser extent in the colon and spleen. Very low levels of expression found in pancreas and brain. Not expressed in the thymus, prostate, ovaries, testis, heart, placenta, lung, liver, skeletal muscle, kidney or peripheral blood leukocytes.

The protein localises to the membrane. In terms of biological role, cell adhesion leukocyte receptor expressed by mucosal venules, helps to direct lymphocyte traffic into mucosal tissues including the Peyer patches and the intestinal lamina propria. It can bind both integrin alpha-4/beta-7 and L-selectin, regulating both the passage and retention of leukocytes. Isoform 2, lacking the mucin-like domain, may be specialized in supporting integrin alpha-4/beta-7-dependent adhesion strengthening, independent of L-selectin binding. This Homo sapiens (Human) protein is Mucosal addressin cell adhesion molecule 1 (MADCAM1).